The primary structure comprises 46 residues: MQFSDPATVLIITILAVTIAFTAVSLYTAFGPPSKQLADPFEEHED.

The helical transmembrane segment at 10–30 (LIITILAVTIAFTAVSLYTAF) threads the bilayer.

Belongs to the PsbN family.

It is found in the cellular thylakoid membrane. May play a role in photosystem I and II biogenesis. The protein is Protein PsbN of Acaryochloris marina (strain MBIC 11017).